Consider the following 534-residue polypeptide: CAP-Gly domain-containing linker protein 3 (534 aa).

Positions 1–16 (MTREDLPDSTPEESKL) are enriched in basic and acidic residues. Residues 1 to 33 (MTREDLPDSTPEESKLPMEFQSPLLEKRRRPVV) are disordered. 3 ANK repeats span residues 107–148 (TDMT…LRSR), 150–173 (TNMNALHYAAYFDVPELLRTLLKA), and 187–299 (NHGT…KAGT). The CAP-Gly 1 domain maps to 304-346 (GTTEFASGQWVGVELDEPDGKNDGSVGGIRYFICPPKQGIFAP). A disordered region spans residues 349 to 391 (KISKAPDQPPSSVTSTPRTPRVDFSRVTGKGRKEKKATHKKSL). Residues 358–367 (PSSVTSTPRT) show a composition bias toward low complexity. Basic residues predominate over residues 377–390 (GKGRKEKKATHKKS). The CAP-Gly 2 domain occupies 423-465 (GKTDFAPGYWFGIELEKPTGKHDGSVFGVRYFTCSAKNGVFAP). Positions 475–534 (PKDPQTDNNDMKKVHQVTMTQPKRNFTKVRTPKEIASENSMSRILFCCWFPWLLRAEMKS) are goLD.

Homodimer.

It localises to the cytoplasm. It is found in the golgi apparatus. Its subcellular location is the golgi stack. Functionally, functions as a cytoplasmic linker protein. Involved in TGN-endosome dynamics. The polypeptide is CAP-Gly domain-containing linker protein 3 (clip3) (Xenopus laevis (African clawed frog)).